The following is a 620-amino-acid chain: Endoglucanase 21 (620 aa).

Residues 1 to 39 (MYGRDPWGGPLEINAADSMTDDDRSRNLQDLDRATPSRP) are disordered. Residues 1–70 (MYGRDPWGGP…DLGCILVSRK (70 aa)) are Cytoplasmic-facing. A compositionally biased stretch (basic and acidic residues) spans 21–39 (DDDRSRNLQDLDRATPSRP). The chain crosses the membrane as a helical; Signal-anchor for type II membrane protein span at residues 71–91 (IFLWTLGTIVVTALLSGFITL). Residues 92–620 (IVKTLPHHHH…TPPPPAPWTP (529 aa)) lie on the Extracellular side of the membrane. Residues N108 and N134 are each glycosylated (N-linked (GlcNAc...) asparagine). D166 acts as the Nucleophile in catalysis. N-linked (GlcNAc...) asparagine glycosylation is found at N217, N325, N346, N409, N426, and N482. Active-site residues include H514 and D561. An N-linked (GlcNAc...) asparagine glycan is attached at N567. E570 is an active-site residue.

This sequence belongs to the glycosyl hydrolase 9 (cellulase E) family. As to expression, expressed in conductive tissues of young roots, cotyledons, rosette leaves, cauline leaves and sepals. Expressed in the leaf trichome support cells.

It localises to the cell membrane. It carries out the reaction Endohydrolysis of (1-&gt;4)-beta-D-glucosidic linkages in cellulose, lichenin and cereal beta-D-glucans.. The sequence is that of Endoglucanase 21 (KOR3) from Arabidopsis thaliana (Mouse-ear cress).